Reading from the N-terminus, the 312-residue chain is Zinc transporter ZitB (312 aa).

A run of 6 helical transmembrane segments spans residues 16-36 (LLIA…GGWL), 40-60 (LALL…FIAL), 81-101 (LTTL…ILIV), 117-137 (TPML…FWIL), 153-173 (LHVL…IVIL), and 177-197 (WTPI…RSAW).

Belongs to the cation diffusion facilitator (CDF) transporter (TC 2.A.4) family. SLC30A subfamily.

The protein resides in the cell inner membrane. In terms of biological role, involved in zinc efflux across the cytoplasmic membrane, thus reducing zinc accumulation in the cytoplasm and rendering bacteria more resistant to zinc. It may contribute to zinc homeostasis at low concentrations of zinc. The sequence is that of Zinc transporter ZitB from Yersinia pestis.